The chain runs to 164 residues: Galectin-3 (164 aa).

In terms of domain architecture, Galectin spans 9-154; the sequence is STVDLSEPLK…FSDVLGVTVL (146 aa). H60, R64, N73, and E84 together coordinate a carbohydrate.

As to quaternary structure, homotetramer. Oligomerization is required for carbohydrate binding.

The protein localises to the secreted. It is found in the extracellular space. Its subcellular location is the extracellular matrix. The protein resides in the cell wall. Binds lactose. May play a role in fruiting body formation. The protein is Galectin-3 (Cgl3) of Coprinopsis cinerea (strain Okayama-7 / 130 / ATCC MYA-4618 / FGSC 9003) (Inky cap fungus).